The chain runs to 244 residues: CTD nuclear envelope phosphatase 1 (244 aa).

Residues 7-29 (LLGLRGFVAFAAKLWSFVLYLLR) form a helical membrane-spanning segment. One can recognise an FCP1 homology domain in the interval 58 to 225 (QVKRKVLVLD…NLLPMLDALR (168 aa)).

Belongs to the dullard family. In terms of assembly, interacts with bmpr1a, bmpr1b and bmpr2.

The protein localises to the membrane. The protein resides in the cytoplasm. Its subcellular location is the perinuclear region. It carries out the reaction O-phospho-L-seryl-[protein] + H2O = L-seryl-[protein] + phosphate. The catalysed reaction is O-phospho-L-threonyl-[protein] + H2O = L-threonyl-[protein] + phosphate. Functionally, serine/threonine protein phosphatase that may dephosphorylate and activate lipins. Lipins are phosphatidate phosphatases that catalyze the conversion of phosphatidic acid to diacylglycerol and control the metabolism of fatty acids at different levels. May indirectly modulate the lipid composition of nuclear and/or endoplasmic reticulum membranes and be required for proper nuclear membrane morphology and/or dynamics. May also indirectly regulate the production of lipid droplets and triacylglycerol. Induces neuronal differentiation by antagonizing BMP signaling. Acts both by dephosphorylating BMPR1A and by promoting BMPR2 proteasomal degradation. The protein is CTD nuclear envelope phosphatase 1 (ctdnep1) of Xenopus laevis (African clawed frog).